The following is a 90-amino-acid chain: Small ribosomal subunit protein bS18 (90 aa).

It belongs to the bacterial ribosomal protein bS18 family. Part of the 30S ribosomal subunit. Forms a tight heterodimer with protein bS6.

In terms of biological role, binds as a heterodimer with protein bS6 to the central domain of the 16S rRNA, where it helps stabilize the platform of the 30S subunit. The sequence is that of Small ribosomal subunit protein bS18 from Bacteroides thetaiotaomicron (strain ATCC 29148 / DSM 2079 / JCM 5827 / CCUG 10774 / NCTC 10582 / VPI-5482 / E50).